Here is a 279-residue protein sequence, read N- to C-terminus: NADPH-dependent 7-cyano-7-deazaguanine reductase (279 aa).

Position 86–88 (86–88 (IES)) interacts with substrate. 88-89 (SK) is an NADPH binding site. Residue cysteine 187 is the Thioimide intermediate of the active site. Aspartate 194 serves as the catalytic Proton donor. Substrate is bound at residue 226-227 (HE). Residue 255–256 (RG) participates in NADPH binding.

It belongs to the GTP cyclohydrolase I family. QueF type 2 subfamily. Homodimer.

The protein localises to the cytoplasm. It catalyses the reaction 7-aminomethyl-7-carbaguanine + 2 NADP(+) = 7-cyano-7-deazaguanine + 2 NADPH + 3 H(+). Its pathway is tRNA modification; tRNA-queuosine biosynthesis. Functionally, catalyzes the NADPH-dependent reduction of 7-cyano-7-deazaguanine (preQ0) to 7-aminomethyl-7-deazaguanine (preQ1). The sequence is that of NADPH-dependent 7-cyano-7-deazaguanine reductase from Actinobacillus pleuropneumoniae serotype 5b (strain L20).